Consider the following 29-residue polypeptide: LPLPPHPGHPGYINFSYEVLTPLKXYQSI.

S16 carries the post-translational modification Phosphoserine.

The protein belongs to the amelogenin family.

Its subcellular location is the secreted. It localises to the extracellular space. The protein resides in the extracellular matrix. Tooth enamel proteins are produced in ameloblasts and play a role in biomineralization. This chain is Amelogenin-like protein (AMEL), found in Oryctolagus cuniculus (Rabbit).